A 235-amino-acid polypeptide reads, in one-letter code: Bypass of stop codon protein 2 (235 aa).

A helical membrane pass occupies residues 68–88; sequence FGIFQLMCSLGVIVLLLPIII. Position 177 is a phosphoserine (S177).

It is found in the lipid droplet. It localises to the membrane. This is Bypass of stop codon protein 2 (BSC2) from Saccharomyces cerevisiae (strain ATCC 204508 / S288c) (Baker's yeast).